The primary structure comprises 281 residues: Apolipoprotein Eb (281 aa).

An N-terminal signal peptide occupies residues 1-18 (MRSLVVFFALAVLTGCQA). Residues 19-24 (RSLFQA) constitute a propeptide that is removed on maturation. A 3 X approximate tandem repeats region spans residues 34-66 (MVDRFWQYVSELNTQTDGMVQNIKGSQLSRELD). 9 repeat units span residues 67–88 (TLIT…TQMT), 89–110 (PYAS…GKLQ), 111–132 (TDMT…TMME), 133–154 (QNAD…KRLN), 155–176 (KDTE…SRAS), 177–199 (QNAD…GATQ), 200–227 (KLGA…GALK), 228–249 (EKLE…DELT), and 254–281 (PYSQ…PTQA). Residues 67–281 (TLITDTMAEL…EATAALPTQA (215 aa)) are 9 X 22 AA approximate tandem repeats.

This sequence belongs to the apolipoprotein A1/A4/E family. As to quaternary structure, homotetramer.

The protein resides in the secreted. It is found in the extracellular space. Its subcellular location is the extracellular matrix. Functionally, APOE is an apolipoprotein, a protein associating with lipid particles, that mainly functions in lipoprotein-mediated lipid transport between organs via the plasma and interstitial fluids. APOE is a core component of plasma lipoproteins and is involved in their production, conversion and clearance. Apolipoproteins are amphipathic molecules that interact both with lipids of the lipoprotein particle core and the aqueous environment of the plasma. In Danio rerio (Zebrafish), this protein is Apolipoprotein Eb (apoeb).